A 269-amino-acid chain; its full sequence is Diaminopimelate epimerase (269 aa).

Residues Asn-15, Gln-49, and Asn-66 each contribute to the substrate site. Cys-75 serves as the catalytic Proton donor. Substrate contacts are provided by residues 76-77 (GN), Asn-155, Asn-187, and 204-205 (ER). Cys-213 acts as the Proton acceptor in catalysis. 214 to 215 (GS) contacts substrate.

This sequence belongs to the diaminopimelate epimerase family. As to quaternary structure, homodimer.

It is found in the cytoplasm. The enzyme catalyses (2S,6S)-2,6-diaminopimelate = meso-2,6-diaminopimelate. The protein operates within amino-acid biosynthesis; L-lysine biosynthesis via DAP pathway; DL-2,6-diaminopimelate from LL-2,6-diaminopimelate: step 1/1. In terms of biological role, catalyzes the stereoinversion of LL-2,6-diaminopimelate (L,L-DAP) to meso-diaminopimelate (meso-DAP), a precursor of L-lysine and an essential component of the bacterial peptidoglycan. This chain is Diaminopimelate epimerase, found in Rickettsia canadensis (strain McKiel).